Here is a 400-residue protein sequence, read N- to C-terminus: Glutamyl-tRNA reductase (400 aa).

Substrate contacts are provided by residues 45-48 (TCNR), serine 103, 108-110 (EDQ), and glutamine 114. The active-site Nucleophile is the cysteine 46. Residue 179 to 184 (GYGEIG) coordinates NADP(+).

It belongs to the glutamyl-tRNA reductase family. As to quaternary structure, homodimer.

It carries out the reaction (S)-4-amino-5-oxopentanoate + tRNA(Glu) + NADP(+) = L-glutamyl-tRNA(Glu) + NADPH + H(+). The protein operates within porphyrin-containing compound metabolism; protoporphyrin-IX biosynthesis; 5-aminolevulinate from L-glutamyl-tRNA(Glu): step 1/2. Catalyzes the NADPH-dependent reduction of glutamyl-tRNA(Glu) to glutamate 1-semialdehyde (GSA). This is Glutamyl-tRNA reductase from Clostridium perfringens (strain SM101 / Type A).